A 273-amino-acid chain; its full sequence is MISIRDLTYFYPEEDLPALKNISLDIRENEFLVILGRNGSGKSTLARLLNGLLLPSQGKVEVDGWNTADANQIQLIRQRVGLLFSNPDNQLISNQVEEDVAFGPENLGLNTAEIRRRVNDSLRLVSMESYKNSAPAFLSGGQKQKIAIAGVMAMKPRYLVLDEALSMIDPRGKREIMESIRSLHKTEGVVVIMITHDLEEAREADRVVVLEEGEVKTISTPEELFPSRASLLALGLAPLEISHIIAEINRQGILLSTDILDIDKLVEEICHFV.

Positions 2 to 237 (ISIRDLTYFY…RASLLALGLA (236 aa)) constitute an ABC transporter domain. ATP is bound at residue 36 to 43 (GRNGSGKS).

It belongs to the ABC transporter superfamily. Energy-coupling factor EcfA family. As to quaternary structure, forms a stable energy-coupling factor (ECF) transporter complex composed of 2 membrane-embedded substrate-binding proteins (S component), 2 ATP-binding proteins (A component) and 2 transmembrane proteins (T component).

Its subcellular location is the cell membrane. In terms of biological role, ATP-binding (A) component of a common energy-coupling factor (ECF) ABC-transporter complex. Unlike classic ABC transporters this ECF transporter provides the energy necessary to transport a number of different substrates. The polypeptide is Energy-coupling factor transporter ATP-binding protein EcfA (Syntrophomonas wolfei subsp. wolfei (strain DSM 2245B / Goettingen)).